A 226-amino-acid chain; its full sequence is Large ribosomal subunit protein uL3 (226 aa).

The disordered stretch occupies residues 135–158 (MSSQRASHGNSRSHNVPGSIGMAQ). Residues 137–150 (SQRASHGNSRSHNV) show a composition bias toward polar residues. Gln158 bears the N5-methylglutamine mark.

The protein belongs to the universal ribosomal protein uL3 family. In terms of assembly, part of the 50S ribosomal subunit. Forms a cluster with proteins L14 and L19. Post-translationally, methylated by PrmB.

One of the primary rRNA binding proteins, it binds directly near the 3'-end of the 23S rRNA, where it nucleates assembly of the 50S subunit. This is Large ribosomal subunit protein uL3 from Polaromonas naphthalenivorans (strain CJ2).